We begin with the raw amino-acid sequence, 363 residues long: NAD(P)H-quinone oxidoreductase subunit 1, chloroplastic (363 aa).

8 helical membrane passes run 27–47 (LIPILIILLGATLGVLVIVWL), 93–113 (WLFSVGPALVVVPVFLSYLVV), 124–144 (LGVGILFWIALSSIAPLGLLM), 162–182 (AAQAISYEIPLALCVLSVALL), 200–220 (ILGWNIWRQPIGFIAFLIASL), 250–270 (FGLFYVGSYLNLLVSALFVSV), 303–323 (ATLGIAITLGKAYLFLFLSIL), and 343–363 (FLLPVSLGNLLLTASLQLALL).

It belongs to the complex I subunit 1 family. In terms of assembly, NDH is composed of at least 16 different subunits, 5 of which are encoded in the nucleus.

The protein resides in the plastid. Its subcellular location is the chloroplast thylakoid membrane. It catalyses the reaction a plastoquinone + NADH + (n+1) H(+)(in) = a plastoquinol + NAD(+) + n H(+)(out). The enzyme catalyses a plastoquinone + NADPH + (n+1) H(+)(in) = a plastoquinol + NADP(+) + n H(+)(out). Its function is as follows. NDH shuttles electrons from NAD(P)H:plastoquinone, via FMN and iron-sulfur (Fe-S) centers, to quinones in the photosynthetic chain and possibly in a chloroplast respiratory chain. The immediate electron acceptor for the enzyme in this species is believed to be plastoquinone. Couples the redox reaction to proton translocation, and thus conserves the redox energy in a proton gradient. In Chaetosphaeridium globosum (Charophycean green alga), this protein is NAD(P)H-quinone oxidoreductase subunit 1, chloroplastic.